The sequence spans 963 residues: Seizure 6-like protein (963 aa).

Positions 1 to 31 (MPVARPQAAGPDRISLFLVAFLLGSPAAAQA) are cleaved as a signal peptide. 3 disordered regions span residues 28–63 (AAQAEDGGPEGEMHPSTAYLLPSASLESSLEEGVTS), 116–150 (RPLATPTTLQRLGSPASATTKLREPEDPEQPTAPA), and 164–204 (LPHS…TTTS). The Extracellular portion of the chain corresponds to 32–897 (EDGGPEGEMH…ESSLEGGNMA (866 aa)). The span at 47 to 59 (LLPSASLESSLEE) shows a compositional bias: low complexity. The span at 120-135 (TPTTLQRLGSPASATT) shows a compositional bias: polar residues. Residues 191 to 204 (TGSASEESQETTTS) show a composition bias toward low complexity. Cys221 and Cys248 are oxidised to a cystine. The CUB 1 domain occupies 221-329 (CGVSFSDPEG…GTFQLHYQAF (109 aa)). Residues Asn251, Asn268, and Asn290 are each glycosylated (N-linked (GlcNAc...) asparagine). The region spanning 331–390 (LSCPFPRRPDAGEVTVMDLHSGGVAHFHCHLGYELQGAKTLTCINASKPHWSSQEPVCSA) is the Sushi 1 domain. 3 cysteine pairs are disulfide-bonded: Cys333–Cys373, Cys359–Cys388, and Cys392–Cys419. N-linked (GlcNAc...) asparagine glycosylation is found at Asn375, Asn398, Asn414, Asn454, Asn516, and Asn558. Residues 392 to 502 (CGGAVHNATI…SAFNIRFEAF (111 aa)) enclose the CUB 2 domain. A Sushi 2 domain is found at 505–566 (GHCYEPYIQN…WNDTEPLCRA (62 aa)). 3 cysteine pairs are disulfide-bonded: Cys507–Cys549, Cys534–Cys564, and Cys568–Cys594. A CUB 3 domain is found at 568 to 679 (CGGELSAVAG…QGFIMNYIEV (112 aa)). Residues Asn614 and Asn682 are each glycosylated (N-linked (GlcNAc...) asparagine). Sushi domains follow at residues 683-742 (DSCS…FCEK), 744-807 (MYCT…HCVS), and 811-872 (LACD…ICKV). 6 disulfides stabilise this stretch: Cys685–Cys727, Cys713–Cys740, Cys746–Cys788, Cys774–Cys805, Cys813–Cys855, and Cys841–Cys870. Residues 898-918 (LAIFIPVLLISLLLGGAYIYV) traverse the membrane as a helical segment. Topologically, residues 919–963 (TRCRQYSSLRLPLMYSHPYSQITVETEFDNPIYETGETREYEVSI) are cytoplasmic.

This sequence belongs to the SEZ6 family. Expressed exclusively in the brain, predominantly in neurons. Wide expression in the gray matter of the brain with high levels in the olfactory bulb, anterior olfactory nuclei, hippocampal formation and cerebellar cortex. Detected diffusely and weakly in the white matter, such as the corpus callosum and cerebellar medulla. In the cerebellar cortex, intensely expressed in Purkinje cells and granule cells. Detected also in interneurons in the molecular layer.

It is found in the cell membrane. Its subcellular location is the endoplasmic reticulum membrane. In terms of biological role, candidate tumor suppressor gene. May contribute to specialized endoplasmic reticulum functions in neurons. The protein is Seizure 6-like protein (Sez6l) of Mus musculus (Mouse).